The chain runs to 670 residues: Transcription factor 4 (670 aa).

The interval 1–83 (MHHQQRMAAL…GTPYDHMTSR (83 aa)) is essential for MYOD1 inhibition. 6 disordered regions span residues 24–244 (AMFS…LGNS), 262–320 (LSYP…SQTG), 335–378 (HTNN…EGPL), 406–426 (PSTA…PSHN), 465–573 (SLLP…MANN), and 637–670 (KRRE…MGQM). Over residues 29–49 (PVSSGKNGPTSLASGHFTGSN) the composition is skewed to polar residues. A phosphoserine mark is found at S66, S87, and S92. Polar residues-rich tracts occupy residues 107-125 (GSYS…QQSL), 136-154 (GTLS…SSNN), 205-215 (PAASTFPSSFF), and 265-305 (PSHS…TDSI). Over residues 336 to 347 (TNNSFSSNPSTP) the composition is skewed to low complexity. Positions 364-373 (NGGQASSSPN) are enriched in polar residues. S371 carries the phosphoserine modification. Residues 378–399 (LHSLQSRIEDRLERLDDAIHVL) are leucine-zipper. 2 stretches are compositionally biased toward low complexity: residues 466–479 (LLPN…LPVQ) and 502–511 (GQSVSSGSSE). Residue S514 is modified to Phosphoserine. Basic and acidic residues-rich tracts occupy residues 526–542 (KSSE…DIKS) and 558–573 (PEQK…MANN). The bHLH domain maps to 567–620 (ERRMANNARERLRVRDINEAFKELGRMVQLHLKSDKPQTKLLILHQAVAVILSL). Residues 622 to 645 (QQVRERNLNPKAACLKRREEEKVS) are class A specific domain.

Efficient DNA binding requires dimerization with another bHLH protein. Isoform 2 seems to form inactive heterodimers with MYOD1. Interacts with HIVEP2. Interacts with NEUROD2. Interacts with AGBL1. Interacts with BHLHA9. As to expression, expressed in the cerebral cortex, Purkinje and granule cell layers of the cerebellum, olfactory neuroepithelium, pyramidal cells of hippocampal layers CA1-CA4, and in the granular cells of the dentate gyrus.

The protein localises to the nucleus. In terms of biological role, transcription factor that binds to the immunoglobulin enhancer Mu-E5/KE5-motif. Involved in the initiation of neuronal differentiation. Activates transcription by binding to the E box (5'-CANNTG-3'). Isoform 2 inhibits MYOD1 activation of the cardiac alpha-actin promoter. Binds to the E-box present in the somatostatin receptor 2 initiator element (SSTR2-INR) to activate transcription. May have a regulatory function in developmental processes as well as during neuronal plasticity. This is Transcription factor 4 (Tcf4) from Mus musculus (Mouse).